Consider the following 388-residue polypeptide: MNIHEYQGKAIFRSMGVAVPEGRVAYTAEEAVEKAKELDSKVYVVKAQIHAGGRGKAGGVKIAKSLSEVETYAKELLGKTLVTHQTGPEGKEIKRLYIEEGCDIQKEYYVGFVIDRATDRVTLMASEEGGTEIEEVAAKTPEKIFKETIDPVVGLAPYQARRIAFNINIPKESINKAAKFLVSLYNVFIEKDCSIVEINPLVTTGEGEVLALDAKVNFDDNALFKHKDIQELRDLEEEDPKEIEASKYDLSYIALDGDIGCMVNGAGLAMATMDTINHFGGNPANFLDVGGGATKEKVTEAFKIILGDENVKGIFVNIFGGIMKCDIIAEGIVAAVKEVELTLPLVVRLEGTNVERGKEILKESGLAIEPAATMAEGAQKIVKLVKEA.

An ATP-grasp domain is found at 9–244; it reads KAIFRSMGVA…LEEEDPKEIE (236 aa). ATP-binding positions include Lys-46, 53-55, Glu-99, Cys-102, and Glu-107; that span reads GRG. Mg(2+) is bound by residues Asn-199 and Asp-213. Substrate is bound by residues Asn-264 and 321 to 323; that span reads GIM.

It belongs to the succinate/malate CoA ligase beta subunit family. Heterotetramer of two alpha and two beta subunits. It depends on Mg(2+) as a cofactor.

The enzyme catalyses succinate + ATP + CoA = succinyl-CoA + ADP + phosphate. It catalyses the reaction GTP + succinate + CoA = succinyl-CoA + GDP + phosphate. The protein operates within carbohydrate metabolism; tricarboxylic acid cycle; succinate from succinyl-CoA (ligase route): step 1/1. In terms of biological role, succinyl-CoA synthetase functions in the citric acid cycle (TCA), coupling the hydrolysis of succinyl-CoA to the synthesis of either ATP or GTP and thus represents the only step of substrate-level phosphorylation in the TCA. The beta subunit provides nucleotide specificity of the enzyme and binds the substrate succinate, while the binding sites for coenzyme A and phosphate are found in the alpha subunit. The sequence is that of Succinate--CoA ligase [ADP-forming] subunit beta from Staphylococcus saprophyticus subsp. saprophyticus (strain ATCC 15305 / DSM 20229 / NCIMB 8711 / NCTC 7292 / S-41).